The chain runs to 587 residues: Phosphatidate phosphatase APP1 (587 aa).

Disordered stretches follow at residues 1–28 (MNSQ…RMGK) and 150–178 (PPHL…SENR). Composition is skewed to low complexity over residues 9–22 (SSSS…PTSG) and 163–174 (SQSSIESSLSSK). The DXDXT motif motif lies at 281–285 (DIDDT). Positions 452-521 (QQRPMQMTKS…NRQLPNLDAN (70 aa)) are disordered. Residues 467–483 (RRPPPPPIPSTQKPSLT) are interaction with SH3 domain of ABP1.

In terms of assembly, monomer. Interacts with ABP1. Mg(2+) is required as a cofactor. In terms of processing, N-glycosylated.

It localises to the cytoplasm. The protein localises to the cytoskeleton. It is found in the actin patch. It carries out the reaction a 1,2-diacyl-sn-glycero-3-phosphate + H2O = a 1,2-diacyl-sn-glycerol + phosphate. The catalysed reaction is 1,2-di-(9Z-octadecenoyl)-sn-glycero-3-phosphate + H2O = 1,2-di-(9Z-octadecenoyl)-sn-glycerol + phosphate. Its activity is regulated as follows. Inhibited by N-ethylmaleimide. Functionally, mg(2+)-dependent phosphatidate (PA) phosphatase which catalyzes the dephosphorylation of PA to yield diacylglycerol. May play a role in vesicular trafficking through its PAP activity at cortical actin patches. Can also utilize diacylglycerol pyrophosphate and lyso-PA as substrates with specificity constants 4- and 7-fold lower, respectively, when compared with PA. The polypeptide is Phosphatidate phosphatase APP1 (APP1) (Saccharomyces cerevisiae (strain ATCC 204508 / S288c) (Baker's yeast)).